The following is a 197-amino-acid chain: Ribonuclease HII (197 aa).

Residues 11 to 197 enclose the RNase H type-2 domain; it reads NLIAGVDEVG…FAPVRKILGL (187 aa). A divalent metal cation-binding residues include D17, E18, and D109.

It belongs to the RNase HII family. It depends on Mn(2+) as a cofactor. Mg(2+) serves as cofactor.

The protein resides in the cytoplasm. It catalyses the reaction Endonucleolytic cleavage to 5'-phosphomonoester.. Functionally, endonuclease that specifically degrades the RNA of RNA-DNA hybrids. This is Ribonuclease HII from Haemophilus ducreyi (strain 35000HP / ATCC 700724).